Consider the following 318-residue polypeptide: DNA repair nuclease/redox regulator APEX1 (318 aa).

Residues 1–33 (MPKRGKKGAVAEDGDELRTEPEAKKSKTAAKKN) are necessary for interaction with YBX1, binding to RNA, association together with NPM1 to rRNA, endoribonuclease activity on abasic RNA and localization in the nucleoli. The disordered stretch occupies residues 1-60 (MPKRGKKGAVAEDGDELRTEPEAKKSKTAAKKNDKEAAGEGPALYEDPPDQKTSPSGKPA). Lysine 6 and lysine 7 each carry N6-acetyllysine; by EP300. The short motif at 8–13 (GAVAED) is the Nuclear localization signal (NLS) element. A compositionally biased stretch (basic and acidic residues) spans 16-38 (ELRTEPEAKKSKTAAKKNDKEAA). The interval 23 to 33 (AKKSKTAAKKN) is necessary for interaction with NPM1 and for efficient rRNA binding. An N6-acetyllysine mark is found at lysine 27, lysine 31, lysine 32, and lysine 35. A Phosphoserine modification is found at serine 54. Residues 64–80 (ICSWNVDGLRAWIKKKG) carry the Nuclear export signal (NES) motif. Cysteine 65 is modified (S-nitrosocysteine; alternate). A disulfide bridge connects residues cysteine 65 and cysteine 93. A Mg(2+)-binding site is contributed by aspartate 70. Position 93 is an S-nitrosocysteine; alternate (cysteine 93). Glutamate 96 is a Mg(2+) binding site. Tyrosine 171 is a catalytic residue. Lysine 197 is modified (N6-acetyllysine). Residues aspartate 210 and asparagine 212 each contribute to the Mg(2+) site. The Proton donor/acceptor role is filled by aspartate 210. At threonine 233 the chain carries Phosphothreonine; by CDK5. The segment at 289 to 318 (HSLLPALCDSKIRSKALGSDHCPITLYLAL) is mitochondrial targeting sequence (MTS). Aspartate 308 contacts Mg(2+). Position 310 is an S-nitrosocysteine (cysteine 310).

It belongs to the DNA repair enzymes AP/ExoA family. In terms of assembly, monomer. Homodimer; disulfide-linked. Component of the SET complex, composed of at least APEX1, SET, ANP32A, HMGB2, NME1 and TREX1. Associates with the dimer XRCC5/XRCC6 in a DNA-dependent manner. Interacts with SIRT1; the interaction is increased in the context of genotoxic stress. Interacts with HDAC1, HDAC2 and HDAC3; the interactions are not dependent on the APEX1 acetylation status. Interacts with XRCC1; the interaction is induced by SIRT1 and increased with the APEX1 acetylated form. Interacts with NPM1 (via N-terminal domain); the interaction is RNA-dependent and decreases in hydrogen peroxide-damaged cells. Interacts (via N-terminus) with YBX1 (via C-terminus); the interaction is increased in presence of APEX1 acetylated at Lys-6 and Lys-7. Interacts with HNRNPL; the interaction is DNA-dependent. Interacts (via N-terminus) with KPNA1 and KPNA2. Interacts with TXN; the interaction stimulates the FOS/JUN AP-1 complex DNA-binding activity in a redox-dependent manner. Interacts with GZMA, KRT8, MDM2, POLB, PRDX6, PRPF19, RPLP0, TOMM20 and WDR77. Binds to CDK5. Mg(2+) serves as cofactor. It depends on Mn(2+) as a cofactor. In terms of processing, phosphorylated. Phosphorylation by kinase PKC or casein kinase CK2 results in enhanced redox activity that stimulates binding of the FOS/JUN AP-1 complex to its cognate binding site. AP-endodeoxyribonuclease activity is not affected by CK2-mediated phosphorylation. Phosphorylation of Thr-233 by CDK5 in response to MPP(+)/MPTP (1-methyl-4-phenylpyridinium) reduces AP-endodeoxyribonuclease activity resulting in accumulation of DNA damage and contributing to neuronal death. Acetylated on Lys-6 and Lys-7. Acetylation is increased by the transcriptional coactivator EP300 acetyltransferase, genotoxic agents like H(2)O(2) and methyl methanesulfonate (MMS). Acetylation increases its binding affinity to the negative calcium response element (nCaRE) DNA promoter. The acetylated form induces a stronger binding of YBX1 to the Y-box sequence in the MDR1 promoter than the unacetylated form. Deacetylated on lysines. Lys-6 and Lys-7 are deacetylated by SIRT1. Post-translationally, cleaved at Lys-31 by granzyme A to create the mitochondrial form; leading in reduction of binding to DNA, AP endodeoxyribonuclease activity, redox activation of transcription factors and to enhanced cell death. Cleaved by granzyme K; leading to intracellular ROS accumulation and enhanced cell death after oxidative stress. In terms of processing, cys-69 and Cys-93 are nitrosylated in response to nitric oxide (NO) and lead to the exposure of the nuclear export signal (NES). Ubiquitinated by MDM2; leading to translocation to the cytoplasm and proteasomal degradation.

The protein localises to the nucleus. It is found in the nucleolus. The protein resides in the nucleus speckle. Its subcellular location is the endoplasmic reticulum. It localises to the cytoplasm. The protein localises to the mitochondrion. It catalyses the reaction a deoxyribonucleotide-2'-deoxyribose-5'-monophosphate-DNA + H2O = a 5'-end 2'-deoxyribose-5'-monophosphate-DNA + a 3'-end 2'-deoxyribonucleotide-DNA + H(+). The catalysed reaction is Exonucleolytic cleavage in the 3'- to 5'-direction to yield nucleoside 5'-phosphates.. It carries out the reaction a 3'-end 2'-deoxyribonucleotide-3'-phosphoglycolate-DNA + H2O = 2-phosphoglycolate + a 3'-end 2'-deoxyribonucleotide-DNA + H(+). The enzyme catalyses a 3'-end 2'-deoxyribonucleotide-8-oxoguanine-DNA + H2O = 8-oxo-dGMP + a 3'-end 2'-deoxyribonucleotide-DNA + H(+). Its activity is regulated as follows. NPM1 stimulates endodeoxyribonuclease activity on double-stranded DNA with AP sites, but inhibits endoribonuclease activity on single-stranded RNA containing AP sites. Multifunctional protein that plays a central role in the cellular response to oxidative stress. The two major activities of APEX1 are DNA repair and redox regulation of transcriptional factors. Functions as an apurinic/apyrimidinic (AP) endodeoxyribonuclease in the base excision repair (BER) pathway of DNA lesions induced by oxidative and alkylating agents. Initiates repair of AP sites in DNA by catalyzing hydrolytic incision of the phosphodiester backbone immediately adjacent to the damage, generating a single-strand break with 5'-deoxyribose phosphate and 3'-hydroxyl ends. Also incises at AP sites in the DNA strand of DNA/RNA hybrids, single-stranded DNA regions of R-loop structures, and single-stranded RNA molecules. Operates at switch sites of immunoglobulin (Ig) constant regions where it mediates Ig isotype class switch recombination. Processes AP sites induced by successive action of AICDA and UNG. Generates staggered nicks in opposite DNA strands resulting in the formation of double-strand DNA breaks that are finally resolved via non-homologous end joining repair pathway. Has 3'-5' exodeoxyribonuclease activity on mismatched deoxyribonucleotides at the 3' termini of nicked or gapped DNA molecules during short-patch BER. Possesses DNA 3' phosphodiesterase activity capable of removing lesions (such as phosphoglycolate and 8-oxoguanine) blocking the 3' side of DNA strand breaks. Also acts as an endoribonuclease involved in the control of single-stranded RNA metabolism. Plays a role in regulating MYC mRNA turnover by preferentially cleaving in between UA and CA dinucleotides of the MYC coding region determinant (CRD). In association with NMD1, plays a role in the rRNA quality control process during cell cycle progression. Acts as a loading factor for POLB onto non-incised AP sites in DNA and stimulates the 5'-terminal deoxyribose 5'-phosphate (dRp) excision activity of POLB. Exerts reversible nuclear redox activity to regulate DNA binding affinity and transcriptional activity of transcriptional factors by controlling the redox status of their DNA-binding domain, such as the FOS/JUN AP-1 complex after exposure to IR. Involved in calcium-dependent down-regulation of parathyroid hormone (PTH) expression by binding to negative calcium response elements (nCaREs). Together with HNRNPL or the dimer XRCC5/XRCC6, associates with nCaRE, acting as an activator of transcriptional repression. May also play a role in the epigenetic regulation of gene expression by participating in DNA demethylation. Stimulates the YBX1-mediated MDR1 promoter activity, when acetylated at Lys-6 and Lys-7, leading to drug resistance. Plays a role in protection from granzyme-mediated cellular repair leading to cell death. Binds DNA and RNA. Associates, together with YBX1, on the MDR1 promoter. Together with NPM1, associates with rRNA. This is DNA repair nuclease/redox regulator APEX1 (APEX1) from Pan paniscus (Pygmy chimpanzee).